The following is a 291-amino-acid chain: Gamma-soluble NSF attachment protein (291 aa).

Belongs to the SNAP family.

Its subcellular location is the membrane. Required for vesicular transport between the endoplasmic reticulum and the Golgi apparatus. Binds to SNARE complex and then recruits NSF to disassemble it. This Arabidopsis thaliana (Mouse-ear cress) protein is Gamma-soluble NSF attachment protein (GSNAP).